Consider the following 79-residue polypeptide: UPF0154 protein lwe1321 (79 aa).

The helical transmembrane segment at Trp2–Ile22 threads the bilayer. The segment covering Lys57–Asn66 has biased composition (polar residues). The interval Lys57–Lys79 is disordered.

It belongs to the UPF0154 family.

Its subcellular location is the cell membrane. In Listeria welshimeri serovar 6b (strain ATCC 35897 / DSM 20650 / CCUG 15529 / CIP 8149 / NCTC 11857 / SLCC 5334 / V8), this protein is UPF0154 protein lwe1321.